The chain runs to 824 residues: FT-interacting protein 1 (824 aa).

C2 domains are found at residues 48–170 (WLGL…PQWY), 217–341 (VRGE…SRWF), and 385–522 (YISD…THAY). Helical transmembrane passes span 625 to 645 (AVSL…VCHW), 657 to 677 (LLLI…LYMF), and 764 to 784 (ATCL…VTPF).

This sequence belongs to the MCTP family. As to quaternary structure, interacts with RFT1 and PI4KG4. In terms of tissue distribution, specifically expressed in the phloem including companion cells.

Its subcellular location is the endoplasmic reticulum membrane. Functionally, involved in the export of the long day-specific flower-promoting signal (florigen) RFT1 from the phloem companion cells to sieve elements. Promotes flowering under long days through the transport of RFT1 from the leaves to the shoot apical meristem (SAM). The sequence is that of FT-interacting protein 1 from Oryza sativa subsp. japonica (Rice).